The chain runs to 412 residues: NADH-quinone oxidoreductase subunit 4 (412 aa).

This sequence belongs to the complex I 49 kDa subunit family. In terms of assembly, NDH-1 is composed of at least 14 different subunits, Nqo1 to Nqo14. The complex has a L-shaped structure, with the hydrophobic arm (subunits Nqo7, Nqo8, Nqo10 to Nqo14) embedded in the inner membrane and the hydrophilic peripheral arm (subunits Nqo1 to Nqo6, Nqo9) protruding into the bacterial cytoplasm. The hydrophilic domain contains all the redox centers.

The protein resides in the cell inner membrane. The catalysed reaction is a quinone + NADH + 5 H(+)(in) = a quinol + NAD(+) + 4 H(+)(out). Its function is as follows. NDH-1 shuttles electrons from NADH, via FMN and iron-sulfur (Fe-S) centers, to quinones in the respiratory chain. The immediate electron acceptor for the enzyme in this species is believed to be ubiquinone. Couples the redox reaction to proton translocation (for every two electrons transferred, four hydrogen ions are translocated across the cytoplasmic membrane), and thus conserves the redox energy in a proton gradient. The sequence is that of NADH-quinone oxidoreductase subunit 4 (nqo4) from Paracoccus denitrificans.